We begin with the raw amino-acid sequence, 355 residues long: Peptide chain release factor 1 (355 aa).

Residue Q231 is modified to N5-methylglutamine. Basic and acidic residues predominate over residues 283-292 (IAKETSERKS). A disordered region spans residues 283–303 (IAKETSERKSQVGTGDRSGRI).

This sequence belongs to the prokaryotic/mitochondrial release factor family. In terms of processing, methylated by PrmC. Methylation increases the termination efficiency of RF1.

It localises to the cytoplasm. In terms of biological role, peptide chain release factor 1 directs the termination of translation in response to the peptide chain termination codons UAG and UAA. This chain is Peptide chain release factor 1, found in Campylobacter curvus (strain 525.92).